The sequence spans 662 residues: ATP-dependent RNA helicase DDX3X (662 aa).

N-acetylserine is present on S2. The interval 2 to 139 is required for TBK1 and IKBKE-dependent IFNB1 activation; the sequence is SHVAVENALG…KSDEDDWSKP (138 aa). A Nuclear export signal motif is present at residues 12–21; sequence LDQQFAGLDL. The interval 19–144 is disordered; that stretch reads LDLNSSDNQS…DWSKPLPPSE (126 aa). Positions 21–34 are enriched in polar residues; sequence LNSSDNQSGGSTAS. The interval 38–44 is interaction with EIF4E; that stretch reads YIPPHLR. The segment covering 44-68 has biased composition (basic and acidic residues); that stretch reads RNREATKGFYDKDSSGWSSSKDKDA. Residue K55 is modified to N6-acetyllysine. The span at 70–89 shows a compositional bias: low complexity; it reads SSFGSRSDSRGKSSFFSDRG. The tract at residues 81 to 90 is interaction with VACV protein K7; that stretch reads KSSFFSDRGS. A phosphoserine mark is found at S82, S86, and S90. The tract at residues 88-123 is involved in binding to RNA G-quadruplex; sequence RGSGSRGRFDDRGRSDYDGIGSRGDRSGFGKFERGG. Over residues 94–130 the composition is skewed to basic and acidic residues; it reads GRFDDRGRSDYDGIGSRGDRSGFGKFERGGNSRWCDK. The tract at residues 100–110 is interaction with IKBKE; it reads GRSDYDGIGSR. The tract at residues 100-662 is interaction with GSK3B; the sequence is GRSDYDGIGS…NSQGVDWWGN (563 aa). R101 carries the post-translational modification Omega-N-methylarginine. S102 is modified (phosphoserine; by IKKE). Phosphotyrosine is present on Y104. Omega-N-methylarginine is present on R110. K118 is subject to N6-acetyllysine. S131 is subject to Phosphoserine. The interval 139–172 is interaction with CHUK; that stretch reads PLPPSERLEQELFSGGNTGINFEKYDDIPVEATG. The Q motif motif lies at 180 to 208; sequence ESFSDVEMGEIIMGNIELTRYTRPTPVQK. S181 carries the post-translational modification Phosphoserine; by TBK1; in vitro. S183 carries the post-translational modification Phosphoserine; by TBK1. Residue 200–207 coordinates ATP; the sequence is YTRPTPVQ. A Helicase ATP-binding domain is found at 211 to 403; the sequence is IPIIKEKRDL…RDFLDEYIFL (193 aa). K215 is covalently cross-linked (Glycyl lysine isopeptide (Lys-Gly) (interchain with G-Cter in SUMO2)). ATP is bound at residue 224–231; it reads AQTGSGKT. Phosphoserine; by TBK1; in vitro is present on S240. Residues 250–259 are involved in stimulation of ATPase activity by DNA and RNA, nucleic acid binding and unwinding and HIV-1 replication; it reads ALRAMKENGR. S269 is subject to Phosphoserine; by TBK1; in vitro. A DEAD box motif is present at residues 347–350; sequence DEAD. Residues 409–662 form an interaction with HCV core protein region; that stretch reads GSTSENITQK…NSQGVDWWGN (254 aa). Residues 414–575 form the Helicase C-terminal domain; it reads NITQKVVWVE…EVPSWLENMA (162 aa). Position 429 is a phosphoserine; by CSNK1E and TBK1; in vitro (S429). Position 438 is a phosphothreonine; by TBK1; in vitro (T438). Phosphoserine; by TBK1; in vitro occurs at positions 442 and 456. At T469 the chain carries Phosphothreonine; by CSNK1E; in vitro. Residue S470 is modified to Phosphoserine; by CSNK1E; in vitro. At S520 the chain carries Phosphoserine; by TBK1; in vitro. Positions 536-661 are interaction with NXF1; it reads GNLGLATSFF…YNSQGVDWWG (126 aa). T542 bears the Phosphothreonine; by TBK1; in vitro mark. S543 is modified (phosphoserine; by CSNK1E and TBK1; in vitro). Position 592 is an omega-N-methylarginine (R592). Residues S594, S605, and S612 each carry the phosphoserine modification. The tract at residues 601-634 is disordered; that stretch reads DYRQSSGASSSSFSSSRASSSRSGGGGHGSSRGF. Residues 604–622 are compositionally biased toward low complexity; it reads QSSGASSSSFSSSRASSSR. 2 positions are modified to omega-N-methylarginine: R617 and R632. A compositionally biased stretch (gly residues) spans 623–634; the sequence is SGGGGHGSSRGF.

It belongs to the DEAD box helicase family. DDX3/DED1 subfamily. As to quaternary structure, homodimer; can bind RNA as a monomer and as a dimer/oligomer. Interacts with TDRD3. Interacts (when phosphorylated at Ser-102) with IRF3; the interaction facilitates the phosphorylation and activation of IRF3 by IKBKE. Directly interacts with XPO1/CRM1. The interaction with XPO1/CMR1 is dependent on the DDX3X nuclear export signal motif and XPO1 interaction with GTPase RAN in its active GTP-bound form. Weakly interacts with TBKBP1/SINTBAD. Directly interacts with TRAF3; this interaction stimulates TRAF3 'Lys-63' ubiquitination. Interacts with CSNK1E in a Wnt-dependent manner; this interaction greatly enhances CSNK1E affinity for ATP, stimulates its kinase activity and promotes CSNK1E-mediated DVL2 phosphorylation. In the presence of RNA, the interaction is decreased. Also interacts with CSNK1D and stimulates its kinase activity. Interacts with TRPV4; this interaction is decreased when the TRPV4 channel is activated, leading to DDX3X relocalization to the nucleus. Interacts with MAP3K14/NIK. Directly interacts with CHUK/IKKA after physiological activation of the TLR7 and TLR8 pathways; this interaction enhances CHUK autophosphorylation. May associate with EIF4F complex, composed of at least EIF4A, EIF4E and EIF4G1/EIF4G3. Directly interacts with EIF4E in an RNA-independent manner; this interaction enhances EIF4E cap-binding ability. Directly interacts with EIF4G1 in an RNA-independent manner. DDX3X competes with EIF4G1 for interaction with EIF4E. Interacts with EIF4A1 and EIF2S1 in an RNA-independent manner. Associates with the eukaryotic translation initiation factor 3 (eIF-3) complex, including with EIF3B and EIF3C subunits. Directly interacts with IKBKE/IKKE; this interaction stimulates IKBKE activating autophosphorylation and is induced upon viral infection. Interacts with TBK1. Interacts with SP1; this interaction potentiates SP1-induced CDKN1A/WAF1/CIP1 transcription. Interacts with GSK3A and GSK3B. Interacts with several death receptors, inclusing FAS, TNFRSF10A and TNFRSF10B. Recruited to TNFRSF10B in the absence of receptor stimulation. When TNFRSF10B is stimulated, further recruited to the receptor and cleaved by caspases. A large proteolytic fragment remains associated with TNFRSF10B. Interacts (via C-terminus) with NXF1/TAP; this interaction may be partly involved in DDX3X nuclear export and in NXF1 localization to stress granules. Identified in an mRNP complex, composed of at least DHX9, DDX3X, ELAVL1, HNRNPU, IGF2BP1/2, ILF3, PABPC1, PCBP2, PTBP2, STAU1, STAU2, SYNCRIP and YBX1. The interaction with IGF2BP1/2 is RNA-dependent. Directly interacts with PABPC1/PABP1 in an RNA-independent manner. This interaction increases in stressed cells and decreases during cell recovery. Interacts (via C-terminus) with MAVS/IPS-1; this interaction occurs rapidly, but transiently after Sendai virus infection. The interaction potentiates MAVS-mediated IFNB induction. Interacts with ERCC6/CBS. Interacts with DHX33 in an RNA-independent manner. Interacts with DDX5 in the cytoplasm; this interaction may be more efficient when both proteins are unphosphorylated. Interacts with RIGI/RIG-1. Interacts with IFIH1/MDA5. Interacts with NCAPH; this interaction may be important for the NCAPH localization at condensing chromosomes during mitosis. Interacts with NLRP3 (via NACHT domain) under inflammasome-activating conditions. Interacts with CAPRIN1. Interacts with HNF4A and NR0B2/SHP in an RNA-independent manner; this interaction disrupts the interaction between HNF4 and NR0B2 that forms inactive heterodimers and enhances the formation of active HNF4 homodimers. Interacts with CREBBP/CBP. Interacts with EP300/p300. Interacts with gamma-tubulin. Interacts with phosphorylated TP53. Directly interacts with RELA/p65; this interaction may trap RELA in the cytoplasm, impairing nuclear relocalization upon TNF activating signals. In terms of assembly, (Microbial infection) Interacts with hepatitis B virus (HBV) polymerase in the cytoplasm; this interaction may inhibit DDX3X interaction with the IKBKE/TBK1 complex, and hence impair IKBKE/TBK1-mediated increase in IFNB production. (Microbial infection) Directly interacts with hepatitis C virus (HCV) core protein in the cytoplasm. As to quaternary structure, (Microbial infection) Interacts with vaccinia virus (VACV) protein K7. In terms of assembly, (Microbial infection) Interacts with HIV-1 protein Rev. (Microbial infection) Interacts with Venezuelan equine encephalitis virus non-structural protein 3. Phosphorylated by TBK1; the phosphorylation is required for the synergistic induction of IFNB mediated by TBK1 and DDX3X. Phosphorylated by IKBKE at Ser-102 after ssRNA viral infection; enhances the induction of INFB promoter by IRF3. The cytoplasmic form is highly phosphorylated in the G1/S phase of the cell cycle and much less at G2/M. Phosphorylation by CSNK1E may inhibit RNA-stimulated ATPase activity. Post-translationally, upon stimulation of death receptors, including TNFRSF10B, recruited to receptors and cleaved by caspases. Proteolytic fragments remain associated with the receptors. This cleavage presumably inactivates DDX3X anti-apoptotic function. In terms of processing, ubiquitinated by RNF39 via 'Lys-48'-linked ubiquitination; leading to proteasomal degradation. Widely expressed. In testis, expressed in spermatids. Expressed in epidermis and liver (at protein level).

Its subcellular location is the cell membrane. The protein resides in the nucleus. It localises to the cytoplasm. The protein localises to the stress granule. It is found in the inflammasome. Its subcellular location is the cell projection. The protein resides in the lamellipodium. It localises to the cytoskeleton. The protein localises to the microtubule organizing center. It is found in the centrosome. The catalysed reaction is ATP + H2O = ADP + phosphate + H(+). Functionally, multifunctional ATP-dependent RNA helicase. The ATPase activity can be stimulated by various ribo-and deoxynucleic acids indicative for a relaxed substrate specificity. In vitro can unwind partially double-stranded DNA with a preference for 5'-single-stranded DNA overhangs. Binds RNA G-quadruplex (rG4s) structures, including those located in the 5'-UTR of NRAS mRNA. Involved in many cellular processes, which do not necessarily require its ATPase/helicase catalytic activities. Involved in transcription regulation. Positively regulates CDKN1A/WAF1/CIP1 transcription in an SP1-dependent manner, hence inhibits cell growth. This function requires its ATPase, but not helicase activity. CDKN1A up-regulation may be cell-type specific. Binds CDH1/E-cadherin promoter and represses its transcription. Potentiates HNF4A-mediated MTTP transcriptional activation; this function requires ATPase, but not helicase activity. Facilitates HNF4A acetylation, possibly catalyzed by CREBBP/EP300, thereby increasing the DNA-binding affinity of HNF4 to its response element. In addition, disrupts the interaction between HNF4 and SHP that forms inactive heterodimers and enhances the formation of active HNF4 homodimers. By promoting HNF4A-induced MTTP expression, may play a role in lipid homeostasis. May positively regulate TP53 transcription. Associates with mRNPs, predominantly with spliced mRNAs carrying an exon junction complex (EJC). Involved in the regulation of translation initiation. Not involved in the general process of translation, but promotes efficient translation of selected complex mRNAs, containing highly structured 5'-untranslated regions (UTR). This function depends on helicase activity. Might facilitate translation by resolving secondary structures of 5'-UTRs during ribosome scanning. Alternatively, may act prior to 43S ribosomal scanning and promote 43S pre-initiation complex entry to mRNAs exhibiting specific RNA motifs, by performing local remodeling of transcript structures located close to the cap moiety. Independently of its ATPase activity, promotes the assembly of functional 80S ribosomes and disassembles from ribosomes prior to the translation elongation process. Positively regulates the translation of cyclin E1/CCNE1 mRNA and consequently promotes G1/S-phase transition during the cell cycle. May activate TP53 translation. Required for endoplasmic reticulum stress-induced ATF4 mRNA translation. Independently of its ATPase/helicase activity, enhances IRES-mediated translation; this activity requires interaction with EIF4E. Independently of its ATPase/helicase activity, has also been shown specifically repress cap-dependent translation, possibly by acting on translation initiation factor EIF4E. Involved in innate immunity, acting as a viral RNA sensor. Binds viral RNAs and promotes the production of type I interferon (IFN-alpha and IFN-beta). Potentiate MAVS/RIGI-mediated induction of IFNB in early stages of infection. Enhances IFNB1 expression via IRF3/IRF7 pathway and participates in NFKB activation in the presence of MAVS and TBK1. Involved in TBK1 and IKBKE-dependent IRF3 activation leading to IFNB induction, acts as a scaffolding adapter that links IKBKE and IRF3 and coordinates their activation. Involved in the TLR7/TLR8 signaling pathway leading to type I interferon induction, including IFNA4 production. In this context, acts as an upstream regulator of IRF7 activation by MAP3K14/NIK and CHUK/IKKA. Stimulates CHUK autophosphorylation and activation following physiological activation of the TLR7 and TLR8 pathways, leading to MAP3K14/CHUK-mediated activatory phosphorylation of IRF7. Also stimulates MAP3K14/CHUK-dependent NF-kappa-B signaling. Negatively regulates TNF-induced IL6 and IL8 expression, via the NF-kappa-B pathway. May act by interacting with RELA/p65 and trapping it in the cytoplasm. May also bind IFNB promoter; the function is independent of IRF3. Involved in both stress and inflammatory responses. Independently of its ATPase/helicase activity, required for efficient stress granule assembly through its interaction with EIF4E, hence promotes survival in stressed cells. Independently of its helicase activity, regulates NLRP3 inflammasome assembly through interaction with NLRP3 and hence promotes cell death by pyroptosis during inflammation. This function is independent of helicase activity. Therefore DDX3X availability may be used to interpret stress signals and choose between pro-survival stress granules and pyroptotic NLRP3 inflammasomes and serve as a live-or-die checkpoint in stressed cells. In association with GSK3A/B, negatively regulates extrinsic apoptotic signaling pathway via death domain receptors, including TNFRSF10B, slowing down the rate of CASP3 activation following death receptor stimulation. Cleavage by caspases may inactivate DDX3X and relieve the inhibition. Independently of its ATPase/helicase activity, allosteric activator of CSNK1E. Stimulates CSNK1E-mediated phosphorylation of DVL2, thereby involved in the positive regulation of Wnt/beta-catenin signaling pathway. Also activates CSNK1A1 and CSNK1D in vitro, but it is uncertain if these targets are physiologically relevant. ATPase and casein kinase-activating functions are mutually exclusive. May be involved in mitotic chromosome segregation. (Microbial infection) Facilitates hepatitis C virus (HCV) replication. During infection, HCV core protein inhibits the interaction between MAVS and DDX3X and therefore impairs MAVS-dependent INFB induction and might recruit DDX3X to HCV replication complex. Its function is as follows. (Microbial infection) Facilitates HIV-1 replication. Acts as a cofactor for XPO1-mediated nuclear export of HIV-1 Rev RNAs. This function is strongly stimulated in the presence of TBK1 and requires DDX3X ATPase activity. In terms of biological role, (Microbial infection) Facilitates Zika virus (ZIKV) replication. Functionally, (Microbial infection) Facilitates Dengue virus (DENV) replication. (Microbial infection) Facilitates Venezuelan equine encephalitis virus (VEEV) replication. This chain is ATP-dependent RNA helicase DDX3X (DDX3X), found in Homo sapiens (Human).